A 246-amino-acid polypeptide reads, in one-letter code: tRNA pseudouridine synthase A (246 aa).

D53 serves as the catalytic Nucleophile. Y111 provides a ligand contact to substrate.

Belongs to the tRNA pseudouridine synthase TruA family. In terms of assembly, homodimer.

The catalysed reaction is uridine(38/39/40) in tRNA = pseudouridine(38/39/40) in tRNA. Formation of pseudouridine at positions 38, 39 and 40 in the anticodon stem and loop of transfer RNAs. This Lysinibacillus sphaericus (strain C3-41) protein is tRNA pseudouridine synthase A.